The primary structure comprises 201 residues: Large ribosomal subunit protein bL12m (201 aa).

Residues 1-38 (MLPVAASRCLWGPRLGLRGAALRLARQQMPSVCAARQL) constitute a mitochondrion transit peptide. 2 disordered regions span residues 37–60 (QLRS…APKE) and 109–130 (VSAA…QKER). 4 positions are modified to N6-acetyllysine: K128, K141, K145, and K147. K153 bears the N6-acetyllysine; alternate mark. Position 153 is an N6-succinyllysine; alternate (K153). Residue K153 forms a Glycyl lysine isopeptide (Lys-Gly) (interchain with G-Cter in ubiquitin) linkage. Position 165 is an N6-succinyllysine (K165). N6-acetyllysine is present on residues K166 and K176. K181 carries the post-translational modification N6-acetyllysine; alternate. Residue K181 is modified to N6-succinyllysine; alternate. K188 is subject to N6-acetyllysine.

This sequence belongs to the bacterial ribosomal protein bL12 family. In terms of assembly, component of the mitochondrial ribosome large subunit (39S) which comprises a 16S rRNA and about 50 distinct proteins. Interacts with NOA1. Two mature forms are produced by differential two-step proteolytic cleavage. Cleaved by the mitochondrial processing protease to produce the long mature form and subsequently by the mitochondrial intermediate protease to produce the short mature form. Post-translationally, in the presence of CUL3, undergoes 'Lys-63'-linked ubiquitination at Lys-153 which results in proteasomal degradation.

The protein localises to the mitochondrion matrix. In terms of biological role, as a component of the mitochondrial large ribosomal subunit, plays a role in mitochondrial translation. When present in mitochondria as a free protein not associated with the ribosome, associates with mitochondrial RNA polymerase POLRMT to activate transcription. Required for POLRMT stability. This Mus musculus (Mouse) protein is Large ribosomal subunit protein bL12m (Mrpl12).